Reading from the N-terminus, the 435-residue chain is Trigger factor (435 aa).

A PPIase FKBP-type domain is found at 162 to 247; sequence GDRINIDYRG…LSGVESSKLP (86 aa).

Belongs to the FKBP-type PPIase family. Tig subfamily.

The protein resides in the cytoplasm. The enzyme catalyses [protein]-peptidylproline (omega=180) = [protein]-peptidylproline (omega=0). Involved in protein export. Acts as a chaperone by maintaining the newly synthesized protein in an open conformation. Functions as a peptidyl-prolyl cis-trans isomerase. In Nitrosospira multiformis (strain ATCC 25196 / NCIMB 11849 / C 71), this protein is Trigger factor.